Reading from the N-terminus, the 456-residue chain is Methylenetetrahydrofolate--tRNA-(uracil-5-)-methyltransferase TrmFO (456 aa).

9 to 14 (GGGMAG) is an FAD binding site.

This sequence belongs to the MnmG family. TrmFO subfamily. FAD is required as a cofactor.

Its subcellular location is the cytoplasm. The catalysed reaction is uridine(54) in tRNA + (6R)-5,10-methylene-5,6,7,8-tetrahydrofolate + NADH + H(+) = 5-methyluridine(54) in tRNA + (6S)-5,6,7,8-tetrahydrofolate + NAD(+). The enzyme catalyses uridine(54) in tRNA + (6R)-5,10-methylene-5,6,7,8-tetrahydrofolate + NADPH + H(+) = 5-methyluridine(54) in tRNA + (6S)-5,6,7,8-tetrahydrofolate + NADP(+). Functionally, catalyzes the folate-dependent formation of 5-methyl-uridine at position 54 (M-5-U54) in all tRNAs. This chain is Methylenetetrahydrofolate--tRNA-(uracil-5-)-methyltransferase TrmFO, found in Novosphingobium aromaticivorans (strain ATCC 700278 / DSM 12444 / CCUG 56034 / CIP 105152 / NBRC 16084 / F199).